We begin with the raw amino-acid sequence, 153 residues long: Ribosome maturation factor RimP (153 aa).

The protein belongs to the RimP family.

It is found in the cytoplasm. Functionally, required for maturation of 30S ribosomal subunits. The sequence is that of Ribosome maturation factor RimP from Trichormus variabilis (strain ATCC 29413 / PCC 7937) (Anabaena variabilis).